Here is a 345-residue protein sequence, read N- to C-terminus: Annexin A9 (345 aa).

4 Annexin repeats span residues 41–112 (FSVD…ALLQ), 113–184 (PAAQ…ALSK), 197–266 (NLEE…SLAS), and 270–341 (NTAL…ALCR).

Belongs to the annexin family. Homodimer.

May act as a low affinity receptor for acetylcholine. The chain is Annexin A9 (Anxa9) from Mus musculus (Mouse).